A 156-amino-acid polypeptide reads, in one-letter code: Transcriptional repressor NrdR (156 aa).

A zinc finger spans residues 3–34; that stretch reads CPYCGETEDKVIDSRQGKEADVIRRRRECLSC. Positions 49–139 constitute an ATP-cone domain; sequence LVIIKKDGRR…VYREFKHVND (91 aa).

Belongs to the NrdR family. Requires Zn(2+) as cofactor.

Functionally, negatively regulates transcription of bacterial ribonucleotide reductase nrd genes and operons by binding to NrdR-boxes. The chain is Transcriptional repressor NrdR from Desulfatibacillum aliphaticivorans.